The sequence spans 171 residues: PBAN-type neuropeptides (171 aa).

The first 22 residues, 1–22 (MFRLYFFFNVICIFLAIRSAIG), serve as a signal peptide directing secretion. Residues 23–47 (GEVPDATEQKINNFLASGKDSEDLS) constitute a propeptide that is removed on maturation. A Leucine amide modification is found at Leu-59. A propeptide spanning residues 63–111 (TIASELHDEMMDEIDDNPLYYSGESPQRVASEIAQGTPYVVLLLTGRVL) is cleaved from the precursor. Residues 120-151 (HSTTPRLGRRDASSSNENNSRPPFAPRLGRNL) form a disordered region. A leucine amide mark is found at Leu-126, Leu-147, and Leu-157. The propeptide occupies 160–171 (SFGAPVVDNFAY).

This sequence belongs to the pyrokinin family.

It localises to the secreted. A hormone that controls sex pheromone production in females and pheromone responsiveness in male. Also mediates visceral muscle contractile activity (myotropic activity). The chain is PBAN-type neuropeptides from Aedes aegypti (Yellowfever mosquito).